The sequence spans 432 residues: NADH-quinone oxidoreductase subunit D (432 aa).

This sequence belongs to the complex I 49 kDa subunit family. NDH-1 is composed of 14 different subunits. Subunits NuoB, C, D, E, F, and G constitute the peripheral sector of the complex.

The protein localises to the cell membrane. The catalysed reaction is a quinone + NADH + 5 H(+)(in) = a quinol + NAD(+) + 4 H(+)(out). NDH-1 shuttles electrons from NADH, via FMN and iron-sulfur (Fe-S) centers, to quinones in the respiratory chain. The immediate electron acceptor for the enzyme in this species is believed to be a menaquinone. Couples the redox reaction to proton translocation (for every two electrons transferred, four hydrogen ions are translocated across the cytoplasmic membrane), and thus conserves the redox energy in a proton gradient. This Mycobacteroides abscessus (strain ATCC 19977 / DSM 44196 / CCUG 20993 / CIP 104536 / JCM 13569 / NCTC 13031 / TMC 1543 / L948) (Mycobacterium abscessus) protein is NADH-quinone oxidoreductase subunit D.